Here is a 362-residue protein sequence, read N- to C-terminus: Cobalt-precorrin-5B C(1)-methyltransferase (362 aa).

It belongs to the CbiD family.

The enzyme catalyses Co-precorrin-5B + S-adenosyl-L-methionine = Co-precorrin-6A + S-adenosyl-L-homocysteine. It functions in the pathway cofactor biosynthesis; adenosylcobalamin biosynthesis; cob(II)yrinate a,c-diamide from sirohydrochlorin (anaerobic route): step 6/10. Its function is as follows. Catalyzes the methylation of C-1 in cobalt-precorrin-5B to form cobalt-precorrin-6A. The protein is Cobalt-precorrin-5B C(1)-methyltransferase of Desulfotalea psychrophila (strain LSv54 / DSM 12343).